Consider the following 444-residue polypeptide: Gentisate transporter (444 aa).

Helical transmembrane passes span 42 to 64, 79 to 101, 108 to 127, 131 to 153, 166 to 188, 198 to 220, 252 to 274, 289 to 311, 318 to 340, 344 to 366, 378 to 400, and 410 to 428; these read AAVL…YGTV, LGTI…GRLS, AAVI…CAFA, WVFG…SVNA, AWAT…LALV, WRFM…MKVI, WISI…LGTW, ALMF…AWAG, RSGV…YPPV, YVIL…AAVA, LGWA…GLLL, and FIMF…SVLL.

Belongs to the major facilitator superfamily. Aromatic acid:H(+) symporter (AAHS) (TC 2.A.1.15) family.

It is found in the cell membrane. Its function is as follows. Transport of gentisate (2,5-dihydroxybenzoate) into the cell. Does not transport 3-hydroxybenzoate or benzoate. This Corynebacterium glutamicum (strain ATCC 13032 / DSM 20300 / JCM 1318 / BCRC 11384 / CCUG 27702 / LMG 3730 / NBRC 12168 / NCIMB 10025 / NRRL B-2784 / 534) protein is Gentisate transporter (genK).